A 514-amino-acid polypeptide reads, in one-letter code: 2,3-bisphosphoglycerate-independent phosphoglycerate mutase (514 aa).

2 residues coordinate Mn(2+): D14 and S64. S64 serves as the catalytic Phosphoserine intermediate. Substrate-binding positions include H125, 155–156 (RD), R187, R193, 263–266 (RADR), and K336. Mn(2+) contacts are provided by D403, H407, D444, H445, and H463.

This sequence belongs to the BPG-independent phosphoglycerate mutase family. In terms of assembly, monomer. Mn(2+) serves as cofactor.

The enzyme catalyses (2R)-2-phosphoglycerate = (2R)-3-phosphoglycerate. The protein operates within carbohydrate degradation; glycolysis; pyruvate from D-glyceraldehyde 3-phosphate: step 3/5. Its function is as follows. Catalyzes the interconversion of 2-phosphoglycerate and 3-phosphoglycerate. The protein is 2,3-bisphosphoglycerate-independent phosphoglycerate mutase of Escherichia coli (strain ATCC 8739 / DSM 1576 / NBRC 3972 / NCIMB 8545 / WDCM 00012 / Crooks).